Reading from the N-terminus, the 156-residue chain is Sensor histidine kinase component HK2 (156 aa).

Topologically, residues 1–42 are extracellular; that stretch reads MALVLAAAGAVTVVQFRDAAHEADPDGALRGLTDDITADLVR. The chain crosses the membrane as a helical span at residues 43-63; sequence ELVTILPIVLVIAAVAAYLLS. The HAMP domain maps to 64 to 120; it reads RAALRPVDRIRAAAQTLTTTPHPDTDAPLPVPPTDDEIAWLATTLNTMLTRLQRALA. At 64-156 the chain is on the cytoplasmic side; it reads RAALRPVDRI…RCAGPDPPTS (93 aa). In terms of domain architecture, Histidine kinase; first part spans 128 to 156; the sequence is DASHELRTPLALLTTELELRCAGPDPPTS. His-131 is modified (phosphohistidine; by autocatalysis).

As to quaternary structure, homodimer. Each monomer interacts with HK1 and the receiver domain of TcrA. Post-translationally, phosphorylated by HK1.

The protein localises to the cell membrane. The catalysed reaction is ATP + protein L-histidine = ADP + protein N-phospho-L-histidine.. Functionally, member of the three-protein two-component system HK1/HK2/TcrA. HK2 transfers its phosphoryl group to TcrA. The sequence is that of Sensor histidine kinase component HK2 from Mycobacterium tuberculosis (strain ATCC 25618 / H37Rv).